The following is a 334-amino-acid chain: Malate dehydrogenase, cytoplasmic (334 aa).

11-17 (GAAGQIA) provides a ligand contact to NAD(+). Residues arginine 92 and arginine 98 each contribute to the substrate site. Residues asparagine 105, glutamine 112, and 129–131 (VGN) contribute to the NAD(+) site. Asparagine 131 and arginine 162 together coordinate substrate. Histidine 187 functions as the Proton acceptor in the catalytic mechanism.

It belongs to the LDH/MDH superfamily. MDH type 2 family. As to quaternary structure, homodimer.

The protein localises to the cytoplasm. Its subcellular location is the cytosol. The enzyme catalyses (S)-malate + NAD(+) = oxaloacetate + NADH + H(+). It carries out the reaction (S)-2-hydroxyglutarate + NAD(+) = 2-oxoglutarate + NADH + H(+). Functionally, catalyzes the reduction of aromatic alpha-keto acids in the presence of NADH. Plays essential roles in the malate-aspartate shuttle and the tricarboxylic acid cycle, important in mitochondrial NADH supply for oxidative phosphorylation. Catalyzes the reduction of 2-oxoglutarate to 2-hydroxyglutarate, leading to elevated reactive oxygen species (ROS). The sequence is that of Malate dehydrogenase, cytoplasmic (mdh1) from Xenopus laevis (African clawed frog).